Reading from the N-terminus, the 148-residue chain is NADPH-dependent 7-cyano-7-deazaguanine reductase (148 aa).

The active-site Thioimide intermediate is cysteine 50. The Proton donor role is filled by aspartate 57. Substrate contacts are provided by residues 72–74 (VES) and 91–92 (HE).

This sequence belongs to the GTP cyclohydrolase I family. QueF type 1 subfamily.

It localises to the cytoplasm. The catalysed reaction is 7-aminomethyl-7-carbaguanine + 2 NADP(+) = 7-cyano-7-deazaguanine + 2 NADPH + 3 H(+). The protein operates within tRNA modification; tRNA-queuosine biosynthesis. Catalyzes the NADPH-dependent reduction of 7-cyano-7-deazaguanine (preQ0) to 7-aminomethyl-7-deazaguanine (preQ1). This Helicobacter pylori (strain HPAG1) protein is NADPH-dependent 7-cyano-7-deazaguanine reductase.